The sequence spans 166 residues: Large ribosomal subunit protein uL10 (166 aa).

Belongs to the universal ribosomal protein uL10 family. Part of the ribosomal stalk of the 50S ribosomal subunit. The N-terminus interacts with L11 and the large rRNA to form the base of the stalk. The C-terminus forms an elongated spine to which L12 dimers bind in a sequential fashion forming a multimeric L10(L12)X complex.

Functionally, forms part of the ribosomal stalk, playing a central role in the interaction of the ribosome with GTP-bound translation factors. This Pseudomonas paraeruginosa (strain DSM 24068 / PA7) (Pseudomonas aeruginosa (strain PA7)) protein is Large ribosomal subunit protein uL10.